We begin with the raw amino-acid sequence, 407 residues long: Multifunctional CCA protein (407 aa).

Positions 8 and 11 each coordinate ATP. Residues Gly8 and Arg11 each contribute to the CTP site. Mg(2+)-binding residues include Asp21 and Asp23. Residues Arg91, Arg137, and Arg140 each coordinate ATP. The CTP site is built by Arg91, Arg137, and Arg140. Residues 228–329 (SGIHTLMVAQ…IKIFDKMDVW (102 aa)) enclose the HD domain.

It belongs to the tRNA nucleotidyltransferase/poly(A) polymerase family. Bacterial CCA-adding enzyme type 1 subfamily. As to quaternary structure, monomer. Can also form homodimers and oligomers. The cofactor is Mg(2+). It depends on Ni(2+) as a cofactor.

It catalyses the reaction a tRNA precursor + 2 CTP + ATP = a tRNA with a 3' CCA end + 3 diphosphate. The catalysed reaction is a tRNA with a 3' CCA end + 2 CTP + ATP = a tRNA with a 3' CCACCA end + 3 diphosphate. Its function is as follows. Catalyzes the addition and repair of the essential 3'-terminal CCA sequence in tRNAs without using a nucleic acid template. Adds these three nucleotides in the order of C, C, and A to the tRNA nucleotide-73, using CTP and ATP as substrates and producing inorganic pyrophosphate. tRNA 3'-terminal CCA addition is required both for tRNA processing and repair. Also involved in tRNA surveillance by mediating tandem CCA addition to generate a CCACCA at the 3' terminus of unstable tRNAs. While stable tRNAs receive only 3'-terminal CCA, unstable tRNAs are marked with CCACCA and rapidly degraded. The protein is Multifunctional CCA protein of Aliivibrio fischeri (strain MJ11) (Vibrio fischeri).